The following is a 218-amino-acid chain: Elongation factor Ts (218 aa).

The involved in Mg(2+) ion dislocation from EF-Tu stretch occupies residues 82–85 (TDFV).

This sequence belongs to the EF-Ts family.

The protein localises to the cytoplasm. Its function is as follows. Associates with the EF-Tu.GDP complex and induces the exchange of GDP to GTP. It remains bound to the aminoacyl-tRNA.EF-Tu.GTP complex up to the GTP hydrolysis stage on the ribosome. The chain is Elongation factor Ts from Prochlorococcus marinus (strain MIT 9312).